The chain runs to 507 residues: Maturase K (507 aa).

The protein belongs to the intron maturase 2 family. MatK subfamily.

It is found in the plastid. Its subcellular location is the chloroplast. Its function is as follows. Usually encoded in the trnK tRNA gene intron. Probably assists in splicing its own and other chloroplast group II introns. The chain is Maturase K from Lyonia ligustrina (Maleberry).